A 557-amino-acid polypeptide reads, in one-letter code: Formate--tetrahydrofolate ligase (557 aa).

Residue 66 to 73 participates in ATP binding; that stretch reads TPAGEGKS.

Belongs to the formate--tetrahydrofolate ligase family.

The catalysed reaction is (6S)-5,6,7,8-tetrahydrofolate + formate + ATP = (6R)-10-formyltetrahydrofolate + ADP + phosphate. It functions in the pathway one-carbon metabolism; tetrahydrofolate interconversion. This Clostridium botulinum (strain 657 / Type Ba4) protein is Formate--tetrahydrofolate ligase.